The chain runs to 355 residues: Holliday junction branch migration complex subunit RuvB (355 aa).

The large ATPase domain (RuvB-L) stretch occupies residues threonine 4–tyrosine 190. Residues leucine 29, arginine 30, glycine 71, lysine 74, threonine 75, threonine 76, glutamate 137–tyrosine 139, arginine 180, tyrosine 190, and arginine 227 each bind ATP. Threonine 75 serves as a coordination point for Mg(2+). A small ATPAse domain (RuvB-S) region spans residues asparagine 191–aspartate 261. Residues alanine 264–threonine 355 are head domain (RuvB-H). Residues arginine 300, arginine 319, and arginine 324 each coordinate DNA.

This sequence belongs to the RuvB family. In terms of assembly, homohexamer. Forms an RuvA(8)-RuvB(12)-Holliday junction (HJ) complex. HJ DNA is sandwiched between 2 RuvA tetramers; dsDNA enters through RuvA and exits via RuvB. An RuvB hexamer assembles on each DNA strand where it exits the tetramer. Each RuvB hexamer is contacted by two RuvA subunits (via domain III) on 2 adjacent RuvB subunits; this complex drives branch migration. In the full resolvosome a probable DNA-RuvA(4)-RuvB(12)-RuvC(2) complex forms which resolves the HJ.

Its subcellular location is the cytoplasm. The catalysed reaction is ATP + H2O = ADP + phosphate + H(+). In terms of biological role, the RuvA-RuvB-RuvC complex processes Holliday junction (HJ) DNA during genetic recombination and DNA repair, while the RuvA-RuvB complex plays an important role in the rescue of blocked DNA replication forks via replication fork reversal (RFR). RuvA specifically binds to HJ cruciform DNA, conferring on it an open structure. The RuvB hexamer acts as an ATP-dependent pump, pulling dsDNA into and through the RuvAB complex. RuvB forms 2 homohexamers on either side of HJ DNA bound by 1 or 2 RuvA tetramers; 4 subunits per hexamer contact DNA at a time. Coordinated motions by a converter formed by DNA-disengaged RuvB subunits stimulates ATP hydrolysis and nucleotide exchange. Immobilization of the converter enables RuvB to convert the ATP-contained energy into a lever motion, pulling 2 nucleotides of DNA out of the RuvA tetramer per ATP hydrolyzed, thus driving DNA branch migration. The RuvB motors rotate together with the DNA substrate, which together with the progressing nucleotide cycle form the mechanistic basis for DNA recombination by continuous HJ branch migration. Branch migration allows RuvC to scan DNA until it finds its consensus sequence, where it cleaves and resolves cruciform DNA. The polypeptide is Holliday junction branch migration complex subunit RuvB (Paraburkholderia xenovorans (strain LB400)).